Consider the following 152-residue polypeptide: MASGVKVDPSCKNAYDLLHNKHQHSYIIFKIDKNDTAIVVEKVGEKNAPYAEFVEEMKKLVEDGKECRYAAVDVEVTVQRQGAEGTSTLNKVIFVQYCPDNAPVRRRMLYASSVRALKASLGLESLFQVQASEMSDLDEKSVKSDLMSNQRI.

In terms of domain architecture, ADF-H spans 4–147; that stretch reads GVKVDPSCKN…DEKSVKSDLM (144 aa).

This sequence belongs to the actin-binding proteins ADF family.

Its function is as follows. Depolymerizes growing actin filaments in muscle cells; required for the assembly of actin filaments into the functional contractile myofilament lattice of muscle. The chain is Actin-depolymerizing factor 2, isoform c from Caenorhabditis elegans.